A 172-amino-acid chain; its full sequence is Ribosome maturation factor RimM (172 aa).

Positions 96–168 constitute a PRC barrel domain; the sequence is EGEFYYHQII…RVDVELMEGL (73 aa).

Belongs to the RimM family. Binds ribosomal protein uS19.

The protein localises to the cytoplasm. In terms of biological role, an accessory protein needed during the final step in the assembly of 30S ribosomal subunit, possibly for assembly of the head region. Essential for efficient processing of 16S rRNA. May be needed both before and after RbfA during the maturation of 16S rRNA. It has affinity for free ribosomal 30S subunits but not for 70S ribosomes. In Streptococcus pyogenes serotype M28 (strain MGAS6180), this protein is Ribosome maturation factor RimM.